The chain runs to 637 residues: Chaperone protein DnaK (637 aa).

Threonine 198 bears the Phosphothreonine; by autocatalysis mark. Residues 597-637 (MYQQQAEGDAARDAAQDAAKDDVVDAEFTEVDDDKNDKKSA) form a disordered region. Residues 605-619 (DAARDAAQDAAKDDV) show a composition bias toward basic and acidic residues. The segment covering 620-630 (VDAEFTEVDDD) has biased composition (acidic residues).

It belongs to the heat shock protein 70 family.

Acts as a chaperone. The protein is Chaperone protein DnaK of Afipia carboxidovorans (strain ATCC 49405 / DSM 1227 / KCTC 32145 / OM5) (Oligotropha carboxidovorans).